We begin with the raw amino-acid sequence, 99 residues long: Large ribosomal subunit protein uL23 (99 aa).

This sequence belongs to the universal ribosomal protein uL23 family. As to quaternary structure, part of the 50S ribosomal subunit. Contacts protein L29, and trigger factor when it is bound to the ribosome.

Its function is as follows. One of the early assembly proteins it binds 23S rRNA. One of the proteins that surrounds the polypeptide exit tunnel on the outside of the ribosome. Forms the main docking site for trigger factor binding to the ribosome. The sequence is that of Large ribosomal subunit protein uL23 from Stenotrophomonas maltophilia (strain R551-3).